Here is a 1115-residue protein sequence, read N- to C-terminus: Disheveled-associated activator of morphogenesis 2 (1115 aa).

The region spanning 40–416 (GPIPNPEELN…QIVLQDERGV (377 aa)) is the GBD/FH3 domain. The stretch at 434–515 (MLINENEVKQ…ELVARHNESS (82 aa)) forms a coiled coil. 2 disordered regions span residues 510 to 605 (RHNE…SHPL) and 655 to 697 (QEGP…SATG). One can recognise an FH1 domain in the interval 518 to 694 (PVSSPPPPGG…TEKASRSMVS (177 aa)). Over residues 540 to 583 (LPPPPPPLPFDSCPPPPAPPLPPGGPPIPPGAPPCFSSGPPPSH) the composition is skewed to pro residues. The region spanning 595 to 1042 (KKRIPQPSHP…DERRARMEFM (448 aa)) is the FH2 domain. One can recognise a DAD domain in the interval 1065-1095 (EESGEFDDLVSALRSGEVFDKDLSKFKRNRK).

Belongs to the formin homology family. In terms of assembly, interacts with DVL3. Interacts with INF2. As to expression, in early embryogenesis, expression is confined to embryonic ectoderm. Highly dynamic expression in later stages of gastrulation. In early somite stages, detected in posterior node and persists until 9-10 somites have developed when expression is concentrated in the chordoneural hinge. During organogenesis, expressed in the CNS, PNS, liver primordia, limb buds and genital tubercle.

Functionally, key regulator of the Wnt signaling pathway, which is required for various processes during development, such as dorsal patterning, determination of left/right symmetry or myelination in the central nervous system. Acts downstream of Wnt ligands and upstream of beta-catenin (CTNNB1). Required for canonical Wnt signaling pathway during patterning in the dorsal spinal cord by promoting the aggregation of Disheveled (Dvl) complexes, thereby clustering and formation of Wnt receptor signalosomes and potentiating Wnt activity. During dorsal patterning of the spinal cord, inhibits oligodendrocytes differentiation via interaction with PIP5K1A. Also regulates non-canonical Wnt signaling pathway. Acts downstream of PITX2 in the developing gut and is required for left/right asymmetry within dorsal mesentery: affects mesenchymal condensation by lengthening cadherin-based junctions through WNT5A and non-canonical Wnt signaling, inducing polarized condensation in the left dorsal mesentery necessary to initiate gut rotation. Together with DAAM1, required for myocardial maturation and sarcomere assembly. Is a regulator of actin nucleation and elongation, filopodia formation and podocyte migration. This Mus musculus (Mouse) protein is Disheveled-associated activator of morphogenesis 2.